The sequence spans 189 residues: Resolvase (189 aa).

Residues 1–139 (MLVGYARVST…EGLKSAKARG (139 aa)) enclose the Resolvase/invertase-type recombinase catalytic domain. Catalysis depends on S9, which acts as the O-(5'-phospho-DNA)-serine intermediate. The tract at residues 130 to 151 (EGLKSAKARGRNGGRPSKRNDK) is disordered. Residues 165-184 (IVDIVKQTGLSRATVYRVLN) constitute a DNA-binding region (H-T-H motif).

The protein belongs to the site-specific recombinase resolvase family.

A likely role for the res protein would be to stabilize pIP404 by reducing the number of plasmid multimers resulting from homologous recombination. In Clostridium perfringens, this protein is Resolvase (res).